The chain runs to 613 residues: MSSATVSRKSLDEARNQRNRSFFLRDIIVIRLINAWWIATFFQPDEFFQSLEPAWNLAFGSQSGAWLTWEWQHQLRTSLHPALFAGVYLVADFISSHILPVGILRATILVAVPQALQAVIAGLGDWYTWQLAVSIYGANSNVSFFALFLQIFNPWQWYCSTRTFSNSLEMTLTVMAMYYWPWELLGVAQTTKENPKPAPILKSLWSLRASLCLAALAVVLRPTNILIWATIVLFTITRISLQGPSPLTLSTVVTLIREAIWCGSLILAISAASDRWYFGFWTFPAYNFLYFNLSKSLAVFYGRSPWHYYFLQGLPLICTTSLPFAVASLYKPTAHATSTQQFNVLKTLAYTVFTTVGALSLITHKEVRFIYPLLPALSILAAPYTASFFTSQPSPTTNNPRPQPQIRNKRYLFVALGVNMFLAGYLSFFHQPAPLNVLAYLRHEYERIHPDSVQLAQTSHFSAMPENEDELFALFLMPCHSTPWRSHLIYPGLRAYALGCEPPLHTEPNTPERDNYRDEADRFYDDPIPFLTSELFSPTKALTVPRYIVGFESIEPWLQEFVQTFEAQSLGLTQVRPVWKGFNGLFNEDWRRSGDMIVWDTGVYDNAPPTKEL.

Asparagine 19 carries an N-linked (GlcNAc...) asparagine glycan. The next 12 helical transmembrane spans lie at 22-42 (FFLRDIIVIRLINAWWIATFF), 83-103 (LFAGVYLVADFISSHILPVGI), 106-126 (ATILVAVPQALQAVIAGLGDW), 132-152 (AVSIYGANSNVSFFALFLQIF), 168-188 (LEMTLTVMAMYYWPWELLGVA), 216-236 (LAVVLRPTNILIWATIVLFTI), 252-272 (VVTLIREAIWCGSLILAISAA), 280-300 (FWTFPAYNFLYFNLSKSLAVF), 309-329 (YFLQGLPLICTTSLPFAVASL), 342-362 (FNVLKTLAYTVFTTVGALSLI), 369-389 (FIYPLLPALSILAAPYTASFF), and 411-431 (YLFVALGVNMFLAGYLSFFHQ).

It belongs to the glycosyltransferase 22 family. PIGB subfamily.

It localises to the endoplasmic reticulum membrane. It participates in glycolipid biosynthesis; glycosylphosphatidylinositol-anchor biosynthesis. Functionally, mannosyltransferase involved in glycosylphosphatidylinositol-anchor biosynthesis. Transfers the third mannose to Man2-GlcN-acyl-PI during GPI precursor assembly. This is GPI mannosyltransferase 3 (GPI10) from Gibberella zeae (strain ATCC MYA-4620 / CBS 123657 / FGSC 9075 / NRRL 31084 / PH-1) (Wheat head blight fungus).